Reading from the N-terminus, the 96-residue chain is MIKSELVQRIADRNPHLYLRDVEKIVNAILDEITNALSRGDRVELRGFGAFSVKHRDARVGRNPRTGAHVSVDEKVVPFFKTGKEMRERLNNGVDD.

The protein belongs to the bacterial histone-like protein family. Heterodimer of an alpha and a beta chain.

This protein is one of the two subunits of integration host factor, a specific DNA-binding protein that functions in genetic recombination as well as in transcriptional and translational control. This Methylocella silvestris (strain DSM 15510 / CIP 108128 / LMG 27833 / NCIMB 13906 / BL2) protein is Integration host factor subunit beta.